The sequence spans 196 residues: ATP-dependent Clp protease proteolytic subunit 1 (196 aa).

Residue Ser96 is the Nucleophile of the active site. His121 is a catalytic residue.

The protein belongs to the peptidase S14 family. Fourteen ClpP subunits assemble into 2 heptameric rings which stack back to back to give a disk-like structure with a central cavity, resembling the structure of eukaryotic proteasomes.

It localises to the cytoplasm. The enzyme catalyses Hydrolysis of proteins to small peptides in the presence of ATP and magnesium. alpha-casein is the usual test substrate. In the absence of ATP, only oligopeptides shorter than five residues are hydrolyzed (such as succinyl-Leu-Tyr-|-NHMec, and Leu-Tyr-Leu-|-Tyr-Trp, in which cleavage of the -Tyr-|-Leu- and -Tyr-|-Trp bonds also occurs).. Functionally, cleaves peptides in various proteins in a process that requires ATP hydrolysis. Has a chymotrypsin-like activity. Plays a major role in the degradation of misfolded proteins. This is ATP-dependent Clp protease proteolytic subunit 1 from Prochlorococcus marinus subsp. pastoris (strain CCMP1986 / NIES-2087 / MED4).